The chain runs to 227 residues: Broad specificity amino-acid racemase RacX (227 aa).

Substrate is bound at residue 51–53 (DRP). Residue Cys82 is the Proton donor/acceptor of the active site. Substrate-binding positions include 83–85 (NTA) and Lys161. Cys191 (proton donor/acceptor) is an active-site residue.

It belongs to the aspartate/glutamate racemases family. Homodimer.

The enzyme catalyses an L-alpha-amino acid = a D-alpha-amino acid. It catalyses the reaction (2S,6S)-2,6-diaminopimelate = meso-2,6-diaminopimelate. It carries out the reaction L-lysine = D-lysine. The catalysed reaction is L-arginine = D-arginine. The enzyme catalyses L-ornithine = D-ornithine. It catalyses the reaction L-histidine = D-histidine. It carries out the reaction L-alanine = D-alanine. The catalysed reaction is L-tyrosine = D-tyrosine. The enzyme catalyses L-phenylalanine = D-phenylalanine. It catalyses the reaction L-serine = D-serine. It carries out the reaction L-glutamine = D-glutamine. The catalysed reaction is L-methionine = D-methionine. The enzyme catalyses L-asparagine = D-asparagine. It catalyses the reaction L-homoserine = D-homoserine. In terms of biological role, amino-acid racemase able to utilize a broad range of substrates. Preferentially catalyzes the epimerization of LL-diaminopimelate, as well as the racemization of D-lysine, L-arginine, L-ornithine, L-lysine and D-arginine. Has lower activity against D-ornithine, L-histidine, L-alanine, L-tyrosine, L-phenylalanine, L-serine, L-glutamine, L-methionine, L-asparagine and L-homoserine. Has weak activity against L-norleucine, L-aminobutyric acid and L-norvaline. Has no activity toward nine L-amino acids (Thr, Glu, Asp, Val, Leu, Ile, Trp, Cit and Aad). D-amino acids might be used as components of peptidoglycan and/or be involved in peptidoglycan metabolism and remodeling. In Bacillus subtilis (strain 168), this protein is Broad specificity amino-acid racemase RacX (racX).